We begin with the raw amino-acid sequence, 615 residues long: Vitamin B12 transporter BtuB (615 aa).

The first 20 residues, M1–A20, serve as a signal peptide directing secretion. Residues N26 to N33 carry the TonB box motif. The region spanning P38–T152 is the TBDR plug domain. Cyanocob(III)alamin-binding positions include S85, N92, and I110 to S111. The TBDR beta-barrel domain maps to K155–F615. The next 3 beta stranded transmembrane spans lie at T158–G165, Y169–Q178, and T184–T195. Ca(2+)-binding residues include D199, Q210, D212, and D214. A run of 2 beta stranded transmembrane segments spans residues F216 to E226 and D231 to D247. Ca(2+) is bound by residues Y248, D249, and D255. Beta stranded transmembrane passes span R257–Q271, G273–D290, T303–Q319, A322–W331, E347–A363, I365–D375, F379–I394, Y397–N411, E429–E438, V444–N453, V468–F486, P490–A505, R513–W525, and D531–D546. Residue T303 coordinates cyanocob(III)alamin. R513 contacts cyanocob(III)alamin. Y547 serves as a coordination point for cyanocob(III)alamin. Transmembrane regions (beta stranded) follow at residues T559 to S573, I586 to A597, and A603 to F615. A TonB C-terminal box motif is present at residues Y598–F615.

It belongs to the TonB-dependent receptor family. BtuB (TC 1.B.14.3.1) subfamily.

The protein localises to the cell outer membrane. Functionally, involved in the active translocation of vitamin B12 (cyanocobalamin) across the outer membrane to the periplasmic space. It derives its energy for transport by interacting with the trans-periplasmic membrane protein TonB. The polypeptide is Vitamin B12 transporter BtuB (Pectobacterium atrosepticum (strain SCRI 1043 / ATCC BAA-672) (Erwinia carotovora subsp. atroseptica)).